A 373-amino-acid chain; its full sequence is Mitochondrial fission regulator 2 (373 aa).

S136 is subject to Phosphoserine. Residues 151-179 (VSEAAIKKIAALEDELTSLRAQIAAIVAM) adopt a coiled-coil conformation. 2 disordered regions span residues 189-331 (GFIS…WDPV) and 346-373 (DDSF…GSRF). Pro residues predominate over residues 224-239 (SPPPLPPPPPPLPPPQ). Composition is skewed to basic and acidic residues over residues 275-287 (KKTD…ESQR) and 297-310 (VLKD…RPVE). 2 positions are modified to phosphoserine: S312 and S348. Positions 354–373 (RSWQGSPFSSPETSRNGSRF) are enriched in polar residues.

The protein belongs to the MTFR1 family.

The protein resides in the mitochondrion. Functionally, may play a role in mitochondrial aerobic respiration essentially in the testis. Can also promote mitochondrial fission. In Rattus norvegicus (Rat), this protein is Mitochondrial fission regulator 2 (Mtfr2).